Here is a 745-residue protein sequence, read N- to C-terminus: Mitogen-activated protein kinase kinase kinase zak-1 (745 aa).

The Protein kinase domain maps to 31 to 305 (IQVGDHIGVG…KVMDECEKFM (275 aa)). ATP-binding positions include 37 to 45 (IGVGTFGAV) and K63. D159 (proton acceptor) is an active-site residue. Residues 307–352 (LEDWKTEIEKQEKNVEKMRKDLEKRREQLEIREKALKQRMKVEQAV) adopt a coiled-coil conformation. In terms of domain architecture, SAM spans 366–438 (WSEHHTSHWV…MKMIRKLADT (73 aa)). The interval 693-745 (LTRRRRTTTTNSEDTEKSDTNNKTPESQARRVHVHGGKDKWNWKKGKSRPKFT) is disordered. Residues 735–745 (WKKGKSRPKFT) show a composition bias toward basic residues.

Belongs to the protein kinase superfamily. STE Ser/Thr protein kinase family. MAP kinase kinase kinase subfamily. Mg(2+) serves as cofactor. Widely expressed; expressed in most tissues, including intestines, muscle and the nervous system.

The protein localises to the cytoplasm. Its subcellular location is the nucleus. It catalyses the reaction L-seryl-[protein] + ATP = O-phospho-L-seryl-[protein] + ADP + H(+). The enzyme catalyses L-threonyl-[protein] + ATP = O-phospho-L-threonyl-[protein] + ADP + H(+). Its function is as follows. Stress-activated component of a protein kinase signal transduction cascade that promotes programmed cell death in response to ribotoxic stress. Acts as the proximal sensor of ribotoxic stress: directly binds to the ribosome, thereby acting as a sentinel for colliding ribosomes. Upon ribosome collisions, activates the stress-activated protein kinase signal transduction cascade, leading to programmed cell death. Acts by catalyzing phosphorylation of MAP kinase kinases, leading to activation of the JNK and MAP kinase p38 pathways. The polypeptide is Mitogen-activated protein kinase kinase kinase zak-1 (Caenorhabditis elegans).